The primary structure comprises 601 residues: Chaperone protein DnaK (601 aa).

A Phosphothreonine; by autocatalysis modification is found at Thr-175. Residues 570-601 (FAQKAASKETSKNEQNEDGSIDAEIKEEDPKA) are disordered. A compositionally biased stretch (basic and acidic residues) spans 575–584 (ASKETSKNEQ). The span at 585-601 (NEDGSIDAEIKEEDPKA) shows a compositional bias: acidic residues.

Belongs to the heat shock protein 70 family.

Functionally, acts as a chaperone. The sequence is that of Chaperone protein DnaK from Mycoplasma mobile (strain ATCC 43663 / 163K / NCTC 11711) (Mesomycoplasma mobile).